Consider the following 145-residue polypeptide: Large ribosomal subunit protein uL15 (145 aa).

The tract at residues 1-58 is disordered; the sequence is MKLHELSPSEGSRKKRKRVGRGPGSGMGGTSTRGNKGHNQRSGGGTRPGFEGGQMPLH. 2 stretches are compositionally biased toward gly residues: residues 21-31 and 42-52; these read RGPGSGMGGTS and SGGGTRPGFEG.

It belongs to the universal ribosomal protein uL15 family. As to quaternary structure, part of the 50S ribosomal subunit.

Binds to the 23S rRNA. The polypeptide is Large ribosomal subunit protein uL15 (Desulforapulum autotrophicum (strain ATCC 43914 / DSM 3382 / VKM B-1955 / HRM2) (Desulfobacterium autotrophicum)).